We begin with the raw amino-acid sequence, 297 residues long: NADH-ubiquinone oxidoreductase chain 1 (297 aa).

A run of 9 helical transmembrane segments spans residues Met1–Glu21, Pro34–Leu54, Trp66–Ile86, Leu99–Gly119, Val139–Leu159, Gly170–Ala190, Leu206–Ala228, Thr235–Arg257, and Leu277–Phe297.

Belongs to the complex I subunit 1 family.

The protein resides in the mitochondrion inner membrane. It carries out the reaction a ubiquinone + NADH + 5 H(+)(in) = a ubiquinol + NAD(+) + 4 H(+)(out). Its function is as follows. Core subunit of the mitochondrial membrane respiratory chain NADH dehydrogenase (Complex I) that is believed to belong to the minimal assembly required for catalysis. Complex I functions in the transfer of electrons from NADH to the respiratory chain. The immediate electron acceptor for the enzyme is believed to be ubiquinone. This chain is NADH-ubiquinone oxidoreductase chain 1, found in Hyaloraphidium curvatum (Lower fungus).